The sequence spans 632 residues: 1-deoxy-D-xylulose-5-phosphate synthase (632 aa).

Thiamine diphosphate contacts are provided by residues His-77 and Gly-118–Ala-120. Asp-149 serves as a coordination point for Mg(2+). Residues Gly-150–Ser-151, Asn-178, Phe-287, and Glu-372 contribute to the thiamine diphosphate site. Asn-178 serves as a coordination point for Mg(2+).

Belongs to the transketolase family. DXPS subfamily. As to quaternary structure, homodimer. The cofactor is Mg(2+). Thiamine diphosphate serves as cofactor.

The enzyme catalyses D-glyceraldehyde 3-phosphate + pyruvate + H(+) = 1-deoxy-D-xylulose 5-phosphate + CO2. It participates in metabolic intermediate biosynthesis; 1-deoxy-D-xylulose 5-phosphate biosynthesis; 1-deoxy-D-xylulose 5-phosphate from D-glyceraldehyde 3-phosphate and pyruvate: step 1/1. Its function is as follows. Catalyzes the acyloin condensation reaction between C atoms 2 and 3 of pyruvate and glyceraldehyde 3-phosphate to yield 1-deoxy-D-xylulose-5-phosphate (DXP). The polypeptide is 1-deoxy-D-xylulose-5-phosphate synthase (Chlorobium luteolum (strain DSM 273 / BCRC 81028 / 2530) (Pelodictyon luteolum)).